A 449-amino-acid chain; its full sequence is Sulfite exporter TauE/SafE family protein 5 (449 aa).

Helical transmembrane passes span 1-21 (MKTL…NANQ), 57-77 (AIIM…AGGI), 78-98 (GGGG…LKTA), 101-121 (FSAF…LFGG), 127-147 (YDLA…GVIC), 150-170 (VLPE…SSLK), 224-244 (IPWT…VIYL), 259-279 (PCGV…LIFT), 315-335 (AMSF…GMLI), 353-373 (TSFM…LLGM), 378-398 (TAYV…VLVQ), and 409-429 (IIVF…TSFG).

Belongs to the 4-toluene sulfonate uptake permease (TSUP) (TC 2.A.102) family.

Its subcellular location is the membrane. The sequence is that of Sulfite exporter TauE/SafE family protein 5 from Arabidopsis thaliana (Mouse-ear cress).